We begin with the raw amino-acid sequence, 450 residues long: GTPase HflX (450 aa).

Disordered stretches follow at residues 79–110 (TSMA…PDAA) and 173–196 (RLRE…TLAL). Residues 178-189 (SGGGGRQQGPGA) are compositionally biased toward gly residues. Positions 230-395 (LRVALVGYTN…TLIAFFEAEM (166 aa)) constitute a Hflx-type G domain. GTP is bound by residues 236–243 (GYTNAGKS), 261–265 (FATLD), 283–286 (DTVG), 349–352 (NKMD), and 373–375 (SAH). S243 and T263 together coordinate Mg(2+).

The protein belongs to the TRAFAC class OBG-HflX-like GTPase superfamily. HflX GTPase family. Monomer. Associates with the 50S ribosomal subunit. Mg(2+) serves as cofactor.

Its subcellular location is the cytoplasm. GTPase that associates with the 50S ribosomal subunit and may have a role during protein synthesis or ribosome biogenesis. The chain is GTPase HflX from Gluconacetobacter diazotrophicus (strain ATCC 49037 / DSM 5601 / CCUG 37298 / CIP 103539 / LMG 7603 / PAl5).